Reading from the N-terminus, the 706-residue chain is B-cell lymphoma 6 protein (706 aa).

One can recognise a BTB domain in the interval 32–99 (TDVVIVVSRE…MYTSRLNLRE (68 aa)). Residues 317–349 (EPPNAPLNRKGLVSPQSPQKSDCQPNSPTESCS) are disordered. The span at 330-349 (SPQSPQKSDCQPNSPTESCS) shows a compositional bias: polar residues. A phosphoserine; by MAPK1 mark is found at serine 333 and serine 343. The residue at position 361 (serine 361) is a Phosphoserine. The interval 376-379 (KKYK) is required for interaction with NuRD complex and for transcriptional repressor activity. The residue at position 379 (lysine 379) is an N6-acetyllysine. At serine 404 the chain carries Phosphoserine. Residues 407 to 467 (AYTAPPACQP…PRSSSESHSP (61 aa)) form a disordered region. Over residues 424 to 456 (DLQSPTKLSASGEDSTIPQASRLNNIVNRSMTG) the composition is skewed to polar residues. The segment covering 457–466 (SPRSSSESHS) has biased composition (low complexity). C2H2-type zinc fingers lie at residues 518 to 541 (FFCN…LQTH), 546 to 568 (YKCD…KTVH), 574 to 596 (YRCN…TRIH), 602 to 624 (YKCE…VLIH), 630 to 652 (YPCE…LRIH), and 658 to 681 (YHCE…RQKH).

As to quaternary structure, homodimer. Interacts (via BTB domain) with the corepressors BCOR, NCOR1 and SMRT/NCOR2; the interactions are direct. Forms preferably ternary complexes with BCOR and SMRT/NCOR2 on target gene promoters but, on enhancer elements, interacts with SMRT/NCOR2 and HDAC3 to repress proximal gene expression. Interacts with histone deacetylases HDAC2, HDAC5 and HDAC9 (via the catalytic domain). Interacts with ZBTB7 and BCL6B. Interacts with SCF(FBXO11) complex; the interaction is independent of phosphorylation and promotes ubiquitination. Interacts (when phosphorylated) with PIN1; the interaction is required for BCL6 degradation upon genotoxic stress. Interacts with ZBTB17; inhibits ZBTB17 transcriptional activity. Interacts with CTBP1, autoinhibits its transcriptional expression. Interacts with NOTCH1 NCID and SIRT1; leads to a epigenetic repression of selective NOTCH1-target genes. Interacts (nor via BTB domain neither acetylated) with the NuRD complex components CHD4, HDAC1, MBD3 and MTA3; the interaction with MTA3 inhibits BCL6 acetylation and is required for BCL6 transpriptional repression. In terms of processing, phosphorylated by MAPK1 in response to antigen receptor activation at Ser-333 and Ser-343. Phosphorylated by ATM in response to genotoxic stress. Phosphorylation induces its degradation by ubiquitin/proteasome pathway. Polyubiquitinated. Polyubiquitinated by SCF(FBXO11), leading to its degradation by the proteasome. Ubiquitinated by the SCF(FBXL17) complex, leading to its degradation by the proteasome: ubiquitination by the SCF(FBXL17) complex takes place when aberrant BTB domain dimers are formed. Post-translationally, acetylated at Lys-379 by EP300 which inhibits the interaction with NuRD complex and the transcriptional repressor function. Deacetylated by HDAC- and SIR2-dependent pathways. As to expression, expressed in germinal center T- and B-cells and in primary immature dendritic cells.

The protein resides in the nucleus. In terms of biological role, transcriptional repressor mainly required for germinal center (GC) formation and antibody affinity maturation which has different mechanisms of action specific to the lineage and biological functions. Forms complexes with different corepressors and histone deacetylases to repress the transcriptional expression of different subsets of target genes. Represses its target genes by binding directly to the DNA sequence 5'-TTCCTAGAA-3' (BCL6-binding site) or indirectly by repressing the transcriptional activity of transcription factors. In GC B-cells, represses genes that function in differentiation, inflammation, apoptosis and cell cycle control, also autoregulates its transcriptional expression and up-regulates, indirectly, the expression of some genes important for GC reactions, such as AICDA, through the repression of microRNAs expression, like miR155. An important function is to allow GC B-cells to proliferate very rapidly in response to T-cell dependent antigens and tolerate the physiological DNA breaks required for immunglobulin class switch recombination and somatic hypermutation without inducing a p53/TP53-dependent apoptotic response. In follicular helper CD4(+) T-cells (T(FH) cells), promotes the expression of T(FH)-related genes but inhibits the differentiation of T(H)1, T(H)2 and T(H)17 cells. Also required for the establishment and maintenance of immunological memory for both T- and B-cells. Suppresses macrophage proliferation through competition with STAT5 for STAT-binding motifs binding on certain target genes, such as CCL2 and CCND2. In response to genotoxic stress, controls cell cycle arrest in GC B-cells in both p53/TP53-dependedent and -independent manners. Besides, also controls neurogenesis through the alteration of the composition of NOTCH-dependent transcriptional complexes at selective NOTCH targets, such as HES5, including the recruitment of the deacetylase SIRT1 and resulting in an epigenetic silencing leading to neuronal differentiation. In Homo sapiens (Human), this protein is B-cell lymphoma 6 protein (BCL6).